Here is a 279-residue protein sequence, read N- to C-terminus: UTP--glucose-1-phosphate uridylyltransferase (279 aa).

It belongs to the UDPGP type 2 family.

It catalyses the reaction alpha-D-glucose 1-phosphate + UTP + H(+) = UDP-alpha-D-glucose + diphosphate. Its function is as follows. May play a role in stationary phase survival. This chain is UTP--glucose-1-phosphate uridylyltransferase (galU), found in Pseudomonas aeruginosa.